Here is a 490-residue protein sequence, read N- to C-terminus: Betaine aldehyde dehydrogenase (490 aa).

3 residues coordinate K(+): S26, I27, and D93. 150-152 (GAW) is a binding site for NAD(+). Residue K162 is the Charge relay system of the active site. NAD(+)-binding positions include 176–179 (KPSE) and 230–233 (GVET). Residue L246 coordinates K(+). Residue E252 is the Proton acceptor of the active site. NAD(+) is bound by residues G254, C286, and E387. The active-site Nucleophile is C286. C286 is subject to Cysteine sulfenic acid (-SOH). Residues K457 and G460 each coordinate K(+). The active-site Charge relay system is the E464.

It belongs to the aldehyde dehydrogenase family. As to quaternary structure, dimer of dimers. It depends on K(+) as a cofactor.

The catalysed reaction is betaine aldehyde + NAD(+) + H2O = glycine betaine + NADH + 2 H(+). Its pathway is amine and polyamine biosynthesis; betaine biosynthesis via choline pathway; betaine from betaine aldehyde: step 1/1. Its function is as follows. Involved in the biosynthesis of the osmoprotectant glycine betaine. Catalyzes the irreversible oxidation of betaine aldehyde to the corresponding acid. The polypeptide is Betaine aldehyde dehydrogenase (Acinetobacter baumannii (strain ACICU)).